Here is a 970-residue protein sequence, read N- to C-terminus: Disease resistance protein RGA2 (970 aa).

The 304-residue stretch at 135–438 (RQAVRRETGS…MAHGFLLSKG (304 aa)) folds into the NB-ARC domain. Residue 182-189 (GMGGLGKT) coordinates ATP. 14 LRR repeats span residues 525–548 (FISLRVLNLGDSTFNKLPSSIGDL), 550–571 (HLRYLNLYGSGMRSLPKQLCKL), 573–594 (NLQTLDLQYCTKLCCLPKETSK), 595–619 (LGSLRNLLLDGSQSLTCMPPRIGSL), 638–662 (LGELGNLNLYGSIKISHLERVKNDK), 672–697 (KGNLHSLSMSWNNFGPHIYESEEVKV), 752–777 (LPCLESLELHWGSADVEYVEEVDIDV), 787–811 (FPSLRKLDIWDFGSLKGLLKKEGEE), 813–832 (FPVLEEMIIHECPFLTLSSN), 833–857 (LRALTSLRICYNKVATSFPEEMFKN), 859–882 (ANLKYLTISRCNNLKELPTSLASL), 884–906 (ALKSLKIQLCCALESLPEEGLEG), 907–931 (LSSLTELFVEHCNMLKCLPEGLQHL), and 946–970 (IKRCEKGIGEDWHKISHIPNVNIYI).

It belongs to the disease resistance NB-LRR family.

In terms of biological role, disease resistance protein. Resistance proteins guard the plant against pathogens that contain an appropriate avirulence protein via a direct or indirect interaction with this avirulence protein. That triggers a defense system which restricts the pathogen growth. Confers a broad resistance to all known races of P.infestans. The sequence is that of Disease resistance protein RGA2 (RGA2) from Solanum bulbocastanum (Wild potato).